Consider the following 534-residue polypeptide: Glycerol kinase 5 (534 aa).

Positions 33 and 34 each coordinate ATP. Glycerol-binding residues include Arg103, Asp280, and Gln281. Thr302, Gly345, and Gly445 together coordinate ATP.

Belongs to the FGGY kinase family. Expressed predominantly in sebaceous glands.

It localises to the cytoplasm. It carries out the reaction glycerol + ATP = sn-glycerol 3-phosphate + ADP + H(+). Its pathway is polyol metabolism; glycerol degradation via glycerol kinase pathway; sn-glycerol 3-phosphate from glycerol: step 1/1. In terms of biological role, skin-specific kinase that plays a key role in glycerol metabolism, catalyzing its phosphorylation to produce sn-glycerol 3-phosphate. Involved in skin-specific regulation of sterol regulatory element-binding protein (SREBP) processing and lipid biosynthesis. In Mus musculus (Mouse), this protein is Glycerol kinase 5 (Gk5).